A 324-amino-acid chain; its full sequence is Glyoxylate/hydroxypyruvate reductase B (324 aa).

Active-site residues include Arg237 and Glu266. The Proton donor role is filled by His285.

It belongs to the D-isomer specific 2-hydroxyacid dehydrogenase family. GhrB subfamily. As to quaternary structure, homodimer.

It localises to the cytoplasm. It catalyses the reaction glycolate + NADP(+) = glyoxylate + NADPH + H(+). The catalysed reaction is (R)-glycerate + NAD(+) = 3-hydroxypyruvate + NADH + H(+). The enzyme catalyses (R)-glycerate + NADP(+) = 3-hydroxypyruvate + NADPH + H(+). Functionally, catalyzes the NADPH-dependent reduction of glyoxylate and hydroxypyruvate into glycolate and glycerate, respectively. The sequence is that of Glyoxylate/hydroxypyruvate reductase B from Escherichia coli (strain SMS-3-5 / SECEC).